The sequence spans 433 residues: GTPase Obg (433 aa).

One can recognise an Obg domain in the interval 1 to 159; that stretch reads MGLTDYCECR…LHVSLEIKYL (159 aa). One can recognise an OBG-type G domain in the interval 160 to 329; it reads ANVGIVGFPN…LVAQVFALHQ (170 aa). GTP is bound by residues 166–173, 191–195, 212–215, 282–285, and 310–312; these read GFPNTGKS, FTTLV, DIPG, NKTD, and ISA. Positions 173 and 193 each coordinate Mg(2+). An OCT domain is found at 355 to 433; the sequence is ASETDHDPLN…FAGQEFVIND (79 aa).

The protein belongs to the TRAFAC class OBG-HflX-like GTPase superfamily. OBG GTPase family. As to quaternary structure, monomer. Requires Mg(2+) as cofactor.

It localises to the cytoplasm. Functionally, an essential GTPase which binds GTP, GDP and possibly (p)ppGpp with moderate affinity, with high nucleotide exchange rates and a fairly low GTP hydrolysis rate. Plays a role in control of the cell cycle, stress response, ribosome biogenesis and in those bacteria that undergo differentiation, in morphogenesis control. In Mycoplasma pneumoniae (strain ATCC 29342 / M129 / Subtype 1) (Mycoplasmoides pneumoniae), this protein is GTPase Obg.